Here is a 302-residue protein sequence, read N- to C-terminus: 33 kDa chaperonin (302 aa).

2 disulfide bridges follow: Cys-234–Cys-236 and Cys-267–Cys-270.

Belongs to the HSP33 family. Post-translationally, under oxidizing conditions two disulfide bonds are formed involving the reactive cysteines. Under reducing conditions zinc is bound to the reactive cysteines and the protein is inactive.

The protein resides in the cytoplasm. Its function is as follows. Redox regulated molecular chaperone. Protects both thermally unfolding and oxidatively damaged proteins from irreversible aggregation. Plays an important role in the bacterial defense system toward oxidative stress. In Neisseria gonorrhoeae (strain NCCP11945), this protein is 33 kDa chaperonin.